The sequence spans 378 residues: Leukosialin (378 aa).

Residues 1 to 7 (WAQVVSQ) form the signal peptide. Over 8–231 (ENLPNTMTML…TVPPRPGSSG (224 aa)) the chain is Extracellular. O-linked (GalNAc...) threonine glycosylation is found at Thr-13, Thr-15, and Thr-20. The segment at 13–33 (TMTMLPFTPNSESPSTSEALS) is disordered. Ser-23, Ser-25, and Ser-27 each carry an O-linked (GalNAc...) serine glycan. Thr-28 is a glycosylation site (O-linked (GalNAc...) threonine). O-linked (GalNAc...) serine glycosylation is found at Ser-29 and Ser-33. An O-linked (GalNAc...) threonine glycan is attached at Thr-34. Residues Ser-36 and Ser-37 are each glycosylated (O-linked (GalNAc...) serine). Residue Thr-40 is glycosylated (O-linked (GalNAc...) threonine). Residues Ser-108 and Ser-113 are each glycosylated (O-linked (GalNAc...) serine). 3 O-linked (GalNAc...) threonine glycosylation sites follow: Thr-118, Thr-120, and Thr-124. 2 O-linked (GalNAc...) serine glycosylation sites follow: Ser-125 and Ser-126. A glycan (O-linked (GalNAc...) threonine) is linked at Thr-174. Residues Ser-176 and Ser-180 are each glycosylated (O-linked (GalNAc...) serine). A glycan (O-linked (GalNAc...) threonine) is linked at Thr-183. O-linked (GalNAc...) serine glycosylation occurs at Ser-187. A glycan (O-linked (GalNAc...) threonine) is linked at Thr-189. Residues 232 to 254 (MLLVSMLIALTVVLVLVALLLLW) traverse the membrane as a helical segment. The interval 255–285 (RQRQKRRTGALTLSRGGKRNGTVDAWAGPAR) is required for interaction with EZR, MSN and RDX and for co-localization to microvilli. Over 255–378 (RQRQKRRTGA…AKDGAAPQSL (124 aa)) the chain is Cytoplasmic. A Nuclear localization signal motif is present at residues 259 to 273 (KRRTGALTLSRGGKR). Residues 265–378 (LTLSRGGKRN…AKDGAAPQSL (114 aa)) are disordered. A Phosphoserine modification is found at Ser-268. The residue at position 276 (Thr-276) is a Phosphothreonine. The segment covering 310 to 321 (GSGQRPTLTTFF) has biased composition (polar residues). Ser-311 is subject to Phosphoserine. Thr-316 is subject to Phosphothreonine. Phosphoserine is present on residues Ser-322 and Ser-326. Position 330 is a phosphoserine; by PKC/PRKCQ (Ser-330). Ser-354 carries the phosphoserine modification. Thr-361 carries the post-translational modification Phosphothreonine.

As to quaternary structure, interacts with SIGLEC1. Monomer. Interacts with CTNNB1. Interacts with EZR, MSN and RDX (via FERM domain). Post-translationally, has a high content of sialic acid and O-linked carbohydrate structures. Phosphorylation at Ser-330 is regulated by chemokines, requires its association with ERM proteins (EZR, RDX and MSN) and is essential for its function in the regulation of T-cell trafficking to lymph nodes. In terms of processing, cleavage by CTSG releases its extracellular domain and triggers its intramembrane proteolysis by gamma-secretase releasing the CD43 cytoplasmic tail chain (CD43-ct) which translocates to the nucleus. Post-translationally, sumoylated. In terms of tissue distribution, cell surface of thymocytes, T-lymphocytes, neutrophils, plasma cells and myelomas.

It localises to the membrane. The protein localises to the cell projection. Its subcellular location is the microvillus. It is found in the uropodium. The protein resides in the nucleus. It localises to the PML body. In terms of biological role, predominant cell surface sialoprotein of leukocytes which regulates multiple T-cell functions, including T-cell activation, proliferation, differentiation, trafficking and migration. Positively regulates T-cell trafficking to lymph-nodes via its association with ERM proteins (EZR, RDX and MSN). Negatively regulates Th2 cell differentiation and predisposes the differentiation of T-cells towards a Th1 lineage commitment. Promotes the expression of IFN-gamma by T-cells during T-cell receptor (TCR) activation of naive cells and induces the expression of IFN-gamma by CD4(+) T-cells and to a lesser extent by CD8(+) T-cells. Plays a role in preparing T-cells for cytokine sensing and differentiation into effector cells by inducing the expression of cytokine receptors IFNGR and IL4R, promoting IFNGR and IL4R signaling and by mediating the clustering of IFNGR with TCR. Acts as a major E-selectin ligand responsible for Th17 cell rolling on activated vasculature and recruitment during inflammation. Mediates Th17 cells, but not Th1 cells, adhesion to E-selectin. Acts as a T-cell counter-receptor for SIGLEC1. Functionally, protects cells from apoptotic signals, promoting cell survival. The polypeptide is Leukosialin (Spn) (Rattus norvegicus (Rat)).